A 313-amino-acid chain; its full sequence is D-alanine--D-alanine ligase (313 aa).

The ATP-grasp domain maps to 108-308 (KLVWQQTGVP…YSELVVKVLS (201 aa)). An ATP-binding site is contributed by 138–193 (VAKLGLPLFVKPASEGSSVAVLKVKTADALPAALSEAATHDKIVIVEKSIEGGGEY). Mg(2+) is bound by residues Asp262, Glu275, and Asn277.

Belongs to the D-alanine--D-alanine ligase family. The cofactor is Mg(2+). Requires Mn(2+) as cofactor.

The protein localises to the cytoplasm. It catalyses the reaction 2 D-alanine + ATP = D-alanyl-D-alanine + ADP + phosphate + H(+). Its pathway is cell wall biogenesis; peptidoglycan biosynthesis. In terms of biological role, cell wall formation. In Burkholderia vietnamiensis (strain G4 / LMG 22486) (Burkholderia cepacia (strain R1808)), this protein is D-alanine--D-alanine ligase.